We begin with the raw amino-acid sequence, 172 residues long: MAKMQAKVQQDERDDGLREKMISVNRVTKVVKGGRILGFAALTVVGDGDGRIGMGKGKAKEVPVAVQKAMDEARRKMVKVSLKNGTLQHEVVGKHGAAKVLMMPAKEGTGVIAGGPMRAIFEVMGVTNVVTKSHGSTNPYNMVRATLDGLQKMSTPGEIAAKRGKSVEDILG.

One can recognise an S5 DRBM domain in the interval 17–80 (LREKMISVNR…DEARRKMVKV (64 aa)).

The protein belongs to the universal ribosomal protein uS5 family. As to quaternary structure, part of the 30S ribosomal subunit. Contacts proteins S4 and S8.

In terms of biological role, with S4 and S12 plays an important role in translational accuracy. Its function is as follows. Located at the back of the 30S subunit body where it stabilizes the conformation of the head with respect to the body. The protein is Small ribosomal subunit protein uS5 of Cupriavidus taiwanensis (strain DSM 17343 / BCRC 17206 / CCUG 44338 / CIP 107171 / LMG 19424 / R1) (Ralstonia taiwanensis (strain LMG 19424)).